The following is a 116-amino-acid chain: Large ribosomal subunit protein uL18 (116 aa).

It belongs to the universal ribosomal protein uL18 family. In terms of assembly, part of the 50S ribosomal subunit; part of the 5S rRNA/L5/L18/L25 subcomplex. Contacts the 5S and 23S rRNAs.

Its function is as follows. This is one of the proteins that bind and probably mediate the attachment of the 5S RNA into the large ribosomal subunit, where it forms part of the central protuberance. This chain is Large ribosomal subunit protein uL18, found in Hahella chejuensis (strain KCTC 2396).